Here is a 141-residue protein sequence, read N- to C-terminus: Transmembrane protein 216 (141 aa).

A run of 4 helical transmembrane segments spans residues 15–35, 49–69, 82–102, and 115–135; these read ILFF…LFIF, LVLD…RLFF, LGIS…YLLL, and SILL…LTAF.

In terms of assembly, part of the tectonic-like complex (also named B9 complex). Interacts with TMEM107.

It is found in the membrane. It localises to the cytoplasm. Its subcellular location is the cytoskeleton. The protein resides in the cilium basal body. Part of the tectonic-like complex which is required for tissue-specific ciliogenesis and may regulate ciliary membrane composition. This is Transmembrane protein 216 (TMEM216) from Bos taurus (Bovine).